Consider the following 234-residue polypeptide: Protein SSP120 (234 aa).

The first 22 residues, 1 to 22 (MRFLRGFVFSLAFTLYKVTATA), serve as a signal peptide directing secretion. 2 EF-hand domains span residues 52-87 (LKDY…NREE) and 108-143 (MAKR…GNKF). Threonine 212 carries the post-translational modification Phosphothreonine.

This Saccharomyces cerevisiae (strain ATCC 204508 / S288c) (Baker's yeast) protein is Protein SSP120 (SSP120).